Consider the following 267-residue polypeptide: Dolichol-phosphate mannosyltransferase (267 aa).

Ser2 carries the post-translational modification N-acetylserine. Residues 2 to 238 are Cytoplasmic-facing; sequence SIEYSVIVPA…QQLKELYVFK (237 aa). Pro10, Tyr12, Glu14, Val42, Asp44, Asp95, Ala96, Asp97, Gln99, and Arg122 together coordinate GDP-alpha-D-mannose. Residues Asp97 and Gln99 each coordinate Mg(2+). Asp97 and Gln99 together coordinate Mn(2+). The residue at position 141 (Ser141) is a Phosphoserine; by PKA. Residues Lys183, Arg212, and Lys218 each contribute to the GDP-alpha-D-mannose site. Residues 239 to 259 form a helical; Anchor for type IV membrane protein membrane-spanning segment; that stretch reads FGANNLILFITFWSILFFYVC. At 260–267 the chain is on the lumenal side; it reads YQLYHLVF.

It belongs to the glycosyltransferase 2 family. As to quaternary structure, interacts with the C-terminus of SAC1, thereby sequestering it to the endoplasmic reticulum in exponentially growing cells. Under nutrient limitation conditions, this interaction is rapidly abolished. Mg(2+) is required as a cofactor. The cofactor is Mn(2+). Ca(2+) serves as cofactor.

It is found in the endoplasmic reticulum membrane. The enzyme catalyses a di-trans,poly-cis-dolichyl phosphate + GDP-alpha-D-mannose = a di-trans,poly-cis-dolichyl beta-D-mannosyl phosphate + GDP. It functions in the pathway protein modification; protein glycosylation. With respect to regulation, inhibited by acetylsalicylic acid (aspirin). Its function is as follows. Transfers mannose from GDP-mannose to dolichol monophosphate to form dolichol phosphate mannose (Dol-P-Man) which is the mannosyl donor in pathways leading to N-glycosylation, glycosyl phosphatidylinositol membrane anchoring, and O-mannosylation of proteins. The sequence is that of Dolichol-phosphate mannosyltransferase from Saccharomyces cerevisiae (strain ATCC 204508 / S288c) (Baker's yeast).